We begin with the raw amino-acid sequence, 547 residues long: Chaperonin GroEL (547 aa).

Residues Thr29–Pro32, Lys50, Asp86–Thr90, Gly414, Asn478–Ala480, and Asp494 contribute to the ATP site.

It belongs to the chaperonin (HSP60) family. In terms of assembly, forms a cylinder of 14 subunits composed of two heptameric rings stacked back-to-back. Interacts with the co-chaperonin GroES.

Its subcellular location is the cytoplasm. It catalyses the reaction ATP + H2O + a folded polypeptide = ADP + phosphate + an unfolded polypeptide.. In terms of biological role, together with its co-chaperonin GroES, plays an essential role in assisting protein folding. The GroEL-GroES system forms a nano-cage that allows encapsulation of the non-native substrate proteins and provides a physical environment optimized to promote and accelerate protein folding. The sequence is that of Chaperonin GroEL from Saccharophagus degradans (strain 2-40 / ATCC 43961 / DSM 17024).